A 69-amino-acid chain; its full sequence is DNA-directed RNA polymerase subunit omega (69 aa).

It belongs to the RNA polymerase subunit omega family. As to quaternary structure, the RNAP catalytic core consists of 2 alpha, 1 beta, 1 beta' and 1 omega subunit. When a sigma factor is associated with the core the holoenzyme is formed, which can initiate transcription.

The enzyme catalyses RNA(n) + a ribonucleoside 5'-triphosphate = RNA(n+1) + diphosphate. Promotes RNA polymerase assembly. Latches the N- and C-terminal regions of the beta' subunit thereby facilitating its interaction with the beta and alpha subunits. The sequence is that of DNA-directed RNA polymerase subunit omega from Geotalea uraniireducens (strain Rf4) (Geobacter uraniireducens).